The following is a 346-amino-acid chain: D-erythrose-4-phosphate dehydrogenase (346 aa).

11 to 12 is an NAD(+) binding site; it reads RI. Substrate-binding positions include 163 to 165, Arg-209, 222 to 223, and Arg-245; these read SCT and TK. Cys-164 (nucleophile) is an active-site residue. Residue Asn-327 participates in NAD(+) binding.

Belongs to the glyceraldehyde-3-phosphate dehydrogenase family. Epd subfamily. Homotetramer.

The protein resides in the cytoplasm. The catalysed reaction is D-erythrose 4-phosphate + NAD(+) + H2O = 4-phospho-D-erythronate + NADH + 2 H(+). It participates in cofactor biosynthesis; pyridoxine 5'-phosphate biosynthesis; pyridoxine 5'-phosphate from D-erythrose 4-phosphate: step 1/5. Functionally, catalyzes the NAD-dependent conversion of D-erythrose 4-phosphate to 4-phosphoerythronate. This Vibrio vulnificus (strain YJ016) protein is D-erythrose-4-phosphate dehydrogenase.